A 477-amino-acid chain; its full sequence is ATP synthase subunit beta (477 aa).

Position 163–170 (163–170 (GGAGVGKT)) interacts with ATP.

This sequence belongs to the ATPase alpha/beta chains family. In terms of assembly, F-type ATPases have 2 components, CF(1) - the catalytic core - and CF(0) - the membrane proton channel. CF(1) has five subunits: alpha(3), beta(3), gamma(1), delta(1), epsilon(1). CF(0) has four main subunits: a(1), b(1), b'(1) and c(9-12).

It localises to the cellular thylakoid membrane. The catalysed reaction is ATP + H2O + 4 H(+)(in) = ADP + phosphate + 5 H(+)(out). Produces ATP from ADP in the presence of a proton gradient across the membrane. The catalytic sites are hosted primarily by the beta subunits. This is ATP synthase subunit beta from Synechococcus sp. (strain JA-2-3B'a(2-13)) (Cyanobacteria bacterium Yellowstone B-Prime).